Here is a 370-residue protein sequence, read N- to C-terminus: Ubiquitin carboxyl-terminal hydrolase 12 (370 aa).

The short motif at 1–4 is the Required for plasma membrane localization of USP12/WDR20 element; the sequence is MEIL. In terms of domain architecture, USP spans 39–369; the sequence is FGLVNFGNTC…SGYILFYQSR (331 aa). Cys48 serves as the catalytic Nucleophile. The interval 145–169 is disordered; that stretch reads KQEKQNGRLPNGNIDNENNNSTPDP. Residues 157–168 show a composition bias toward polar residues; it reads NIDNENNNSTPD. Zn(2+) contacts are provided by Cys186, Cys189, Cys233, and Cys236. Catalysis depends on His317, which acts as the Proton acceptor.

Belongs to the peptidase C19 family. USP12/USP46 subfamily. As to quaternary structure, interacts with WDR48. Interacts with WDR20; this interaction promotes translocation of the USP12 complex to the plasma membrane. Component of the USP12-WDR20-WDR48 deubiquitinating complex. Component of the USP12-DMWD-WDR48 deubiquitinating complex. Interacts with PHLPP1. Interacts with RBPJ. Interacts with CBP; this interaction blocks the acetyltransferase activity of CREBBP. Interacts with ITCH; the interaction is more efficient when both USP12 and WDR48/UAF1 are involved and may mediate recruitment of the USP12 deubiquitinating complex to Notch. Interacts with OPTN and SQSTM1/p62; the interaction is independent of deubiquitinase activity and may be involved in regulation of autophagic flux. (Microbial infection) Interacts with Epstein-Barr virus protein EBNA3.

The protein resides in the nucleus. It is found in the cytoplasm. It localises to the cell membrane. It carries out the reaction Thiol-dependent hydrolysis of ester, thioester, amide, peptide and isopeptide bonds formed by the C-terminal Gly of ubiquitin (a 76-residue protein attached to proteins as an intracellular targeting signal).. With respect to regulation, activated by interaction with WDR20, WDR48 and DMWD through different allosteric mechanisms. Functionally, deubiquitinating enzyme that plays various roles in the regulation of the immune response and inflammation. During TCR engagement and activation, translocates into the cytoplasm and deubiquitinates its substrates LAT and TRAT1 and prevents their lysosome-dependent degradation to stabilize the TCR signaling complex at the plasma membrane. Plays an essential role in the selective LPS-induced macrophage response through the activation of NF-kappa-B pathway. In addition, promotes that antiviral immune response through targeting DNA sensor IFI16 to inhibit its proteasome-dependent degradation. Participates in the interferon signaling pathway and antiviral response independently of its deubiquitinase activity by maintaining nuclear phosphorylated STAT1 levels via inhibition of its CREBBP-mediated acetylation and subsequent dephosphorylation. Plays an intrinsic role in promoting the differentiation, activation and proliferation of CD4(+) T-cell by activating the NF-kappa-B signaling pathway through deubiquitinating and stabilizing B-cell lymphoma/leukemia 10/BCL10. In myeloid-derived suppressor cells promotes the activation of the NF-kappa-B via deubiquitination and stabilization of RELA. Regulates the 'Lys-63'-linked polyubiquitin chains of BAX and thereby modulates the mitochondrial apoptotic process. Negative regulator of NOTCH signaling that specifically deubiquitinates non-activated NOTCH receptors to target them for lysosomal degradation; deubiquitination of NOTCH stimulates its transport form late endosomes to lysosomes. Protects neurons against HTT/huntingtin-induced polyglutamine expansion-dependent neurodegeneration through regulation of autophagic flux. This function is independent of deubiquitinase activity or of other components of the USP12-WDR20-WDR48 deubiquitinating complex. In complex with WDR48, acts as a potential tumor suppressor by positively regulating PHLPP1 stability. In terms of biological role, (Microbial infection) Forms a complex with Epstein-Barr virus protein EBNA3 which is an active deubiquitinase activity that may select specific substrates to promote B-lymphocyte transformation. This Homo sapiens (Human) protein is Ubiquitin carboxyl-terminal hydrolase 12 (USP12).